The chain runs to 234 residues: uncharacterized protein (234 aa).

68–70 contacts L-glutamine; sequence GES. The active-site Nucleophile is the cysteine 101. Residues arginine 131 and 167–168 contribute to the L-glutamine site; that span reads IR. Residues histidine 208 and glutamate 210 each act as charge relay system in the active site.

It belongs to the glutaminase PdxT/SNO family.

It is found in the cytoplasm. It catalyses the reaction L-glutamine + H2O = L-glutamate + NH4(+). This is an uncharacterized protein from Schizosaccharomyces pombe (strain 972 / ATCC 24843) (Fission yeast).